We begin with the raw amino-acid sequence, 189 residues long: DVLFARTMHGVFKNIEFMCTRKDSKTWGKDAWKKIVVCVVSDGRAKINPRTRAVLAGLGVYQDGIAKQQVNGKDVTAHIYEYTTQVGISLKKDIVTLTPKQQPVQLLFCLKEKNQKKINSHRWFFQAFGRVLDPNICVLLDAGTKPGKDSIYHLWKAFDLEPHCAGACGEIKAMLGPGGKNLVNPLVAT.

Belongs to the chitin synthase family. Class I subfamily.

The protein resides in the cell membrane. The enzyme catalyses [(1-&gt;4)-N-acetyl-beta-D-glucosaminyl](n) + UDP-N-acetyl-alpha-D-glucosamine = [(1-&gt;4)-N-acetyl-beta-D-glucosaminyl](n+1) + UDP + H(+). In terms of biological role, polymerizes chitin, a structural polymer of the cell wall and septum, by transferring the sugar moiety of UDP-GlcNAc to the non-reducing end of the growing chitin polymer. The chain is Chitin synthase 1 (chs1) from Botryotinia fuckeliana (Noble rot fungus).